The sequence spans 601 residues: Glutathione-regulated potassium-efflux system protein KefB (601 aa).

Transmembrane regions (helical) follow at residues 4–24 (ADLL…VPLA), 29–49 (IGAV…GLGF), 55–75 (EILH…GLEL), 87–107 (IFGV…GLLM), 111–131 (FLWQ…TAMA), 152–172 (VLLF…LLAG), 177–197 (HFDW…LIGG), 207–227 (FIAA…LVLS), 230–250 (LFMD…GVLL), 262–282 (AIDP…GMSL), 284–304 (LGVL…LVVI), 324–344 (MQFA…FSTA), and 356–376 (ALLL…MKGI). The 120-residue stretch at 400-519 (KPQVIVVGFG…AGVTQFSRET (120 aa)) folds into the RCK N-terminal domain.

The protein belongs to the monovalent cation:proton antiporter 2 (CPA2) transporter (TC 2.A.37) family. KefB subfamily. In terms of assembly, interacts with the regulatory subunit KefG.

The protein localises to the cell inner membrane. Pore-forming subunit of a potassium efflux system that confers protection against electrophiles. Catalyzes K(+)/H(+) antiport. The polypeptide is Glutathione-regulated potassium-efflux system protein KefB (Salmonella paratyphi A (strain ATCC 9150 / SARB42)).